The sequence spans 1957 residues: [F-actin]-monooxygenase MICAL2 (1957 aa).

The monooxygenase domain stretch occupies residues 2–494 (GENEDEKQAQ…KHLYITKELE (493 aa)). FAD-binding positions include cysteine 97, 116 to 118 (EKR), 123 to 125 (RNN), phenylalanine 183, tyrosine 298, and aspartate 398. Residues 516–619 (DIRPSKLLTW…MVMYLSKFYE (104 aa)) form the Calponin-homology (CH) domain. The residue at position 631 (serine 631) is a Phosphoserine. Residues 660-681 (RKRTPRVDGQTGENDMNKRRRK) carry the Nuclear localization signal motif. Disordered stretches follow at residues 660-714 (RKRT…NQNK) and 886-942 (QNKL…HPSH). The span at 687–714 (DEPSNFSSRSLGSNQECGSSKEGGNQNK) shows a compositional bias: polar residues. Residues 899–910 (PPSPPSRLPSPD) show a composition bias toward pro residues. The segment covering 911-925 (PAASSSPSTVDSASP) has biased composition (low complexity). An LIM zinc-binding domain is found at 1000-1062 (DTCYFCKKRV…KPHFIHCKTN (63 aa)). Zn(2+) is bound by residues cysteine 1002, cysteine 1005, histidine 1023, cysteine 1026, cysteine 1029, cysteine 1032, cysteine 1052, and histidine 1055. Disordered stretches follow at residues 1070 to 1143 (AELK…PSEW), 1168 to 1243 (SEDS…TPSK), 1258 to 1345 (VNKR…LYLP), 1361 to 1431 (GEDG…EGGP), 1467 to 1626 (KAGE…SPPC), and 1675 to 1779 (ESRQ…KEKK). Basic and acidic residues predominate over residues 1185 to 1195 (SHTEPCEEKPW). Residues 1232-1243 (RANSFQSPTPSK) are compositionally biased toward polar residues. A compositionally biased stretch (low complexity) spans 1275–1294 (LPSSSSHSSSPPSSSSTSVS). A compositionally biased stretch (polar residues) spans 1302 to 1316 (SPPQMTASEPLSQVS). The segment at 1324-1363 (TPNFRRRAVAQGAPREIPLYLPHHPKPEWAEYCLVSPGED) is interaction with MAPK1. 2 stretches are compositionally biased toward basic and acidic residues: residues 1388–1402 (SNHR…KDRS) and 1413–1431 (GEDR…EGGP). The segment covering 1485–1496 (VLKPVRPLLLPR) has biased composition (low complexity). Residues 1552 to 1562 (GGKKAWAKQES) show a composition bias toward basic and acidic residues. The span at 1570–1579 (CTRSFSLRKT) shows a compositional bias: polar residues. Residue serine 1688 is modified to Phosphoserine. Positions 1718 to 1733 (APPPPPPPPPPPPPPT) are enriched in pro residues. Residues 1751-1762 (ASSSASSTSSSS) are compositionally biased toward low complexity. The 150-residue stretch at 1796-1945 (KQEELKRLYK…EKAEDQHFES (150 aa)) folds into the bMERB domain.

This sequence belongs to the Mical family. As to quaternary structure, interacts with PLXNA4. Interacts with RAB1B. Interacts with MAPK1/ERK2. Interacts with RAB35, RAB8A, RAB10, RAB13 and RAB15 (in their GTP-bound forms); binding to RAB35 is of low affinity compared to other Rab proteins; at least in case of RAB8A may bind 2 molecules of RAB8A simultaneously through a high and a low affinity binding site, respectively. May interact with MAPK1/ERK2. Interacts with CORO1C; this interaction recruits MICAL2 to the actin filaments. Requires FAD as cofactor.

It localises to the nucleus. The protein localises to the cytoplasm. It carries out the reaction L-methionyl-[F-actin] + NADPH + O2 + H(+) = L-methionyl-(R)-S-oxide-[F-actin] + NADP(+) + H2O. Its activity is regulated as follows. Specifically inhibited by CCG-1423, a small molecule inhibitor of SRF:MKL1/MRTF-A-dependent transcription. Its function is as follows. Methionine monooxygenase that promotes depolymerization of F-actin by mediating oxidation of residues 'Met-44' and 'Met-47' on actin to form methionine-sulfoxide, resulting in actin filament disassembly and preventing repolymerization. Regulates the disassembly of branched actin networks also by oxidizing ARP3B-containing ARP2/3 complexes leading to ARP3B dissociation from the network. Acts as a key regulator of the SRF signaling pathway elicited by nerve growth factor and serum: mediates oxidation and subsequent depolymerization of nuclear actin, leading to increase MKL1/MRTF-A presence in the nucleus and promote SRF:MKL1/MRTF-A-dependent gene transcription. Does not activate SRF:MKL1/MRTF-A through RhoA. The protein is [F-actin]-monooxygenase MICAL2 of Homo sapiens (Human).